The chain runs to 69 residues: DNA-directed RNA polymerase subunit omega (69 aa).

The protein belongs to the RNA polymerase subunit omega family. As to quaternary structure, the RNAP catalytic core consists of 2 alpha, 1 beta, 1 beta' and 1 omega subunit. When a sigma factor is associated with the core the holoenzyme is formed, which can initiate transcription.

The catalysed reaction is RNA(n) + a ribonucleoside 5'-triphosphate = RNA(n+1) + diphosphate. Functionally, promotes RNA polymerase assembly. Latches the N- and C-terminal regions of the beta' subunit thereby facilitating its interaction with the beta and alpha subunits. The polypeptide is DNA-directed RNA polymerase subunit omega (Geotalea daltonii (strain DSM 22248 / JCM 15807 / FRC-32) (Geobacter daltonii)).